Consider the following 339-residue polypeptide: BTB/POZ domain-containing protein KCTD9 (339 aa).

The KHA domain occupies 3 to 82; the sequence is RVTLFLNGSP…PQTDARPPGG (80 aa). S11 is modified (phosphoserine). The BTB domain occupies 89–161; it reads DWLTLNVGGR…LRHGQLIVND (73 aa). 3 consecutive Pentapeptide repeat domains span residues 223-247, 253-292, and 293-327; these read ANLQ…NFED, ANLE…NLRG, and ATLA…IFEE.

In terms of assembly, forms pentamers. Component of a complex mades of five KCTD9 and five CUL3 subunits.

The protein operates within protein modification; protein ubiquitination. Substrate-specific adapter of a BCR (BTB-CUL3-RBX1) E3 ubiquitin-protein ligase complex, which mediates the ubiquitination of target proteins, leading to their degradation by the proteasome. The chain is BTB/POZ domain-containing protein KCTD9 (Kctd9) from Mus musculus (Mouse).